A 170-amino-acid polypeptide reads, in one-letter code: Negative modulator of initiation of replication (170 aa).

Residues N139–K145 form an interaction with DNA region.

The protein belongs to the SeqA family. As to quaternary structure, homodimer. Polymerizes to form helical filaments.

The protein resides in the cytoplasm. Its function is as follows. Negative regulator of replication initiation, which contributes to regulation of DNA replication and ensures that replication initiation occurs exactly once per chromosome per cell cycle. Binds to pairs of hemimethylated GATC sequences in the oriC region, thus preventing assembly of replication proteins and re-initiation at newly replicated origins. Repression is relieved when the region becomes fully methylated. This is Negative modulator of initiation of replication from Tolumonas auensis (strain DSM 9187 / NBRC 110442 / TA 4).